A 274-amino-acid chain; its full sequence is Large ribosomal subunit protein uL2 (274 aa).

The tract at residues 224–256 (VMNPVDHPHGGGEGKTGEGRHPVDPWGNLTKGY) is disordered. Basic and acidic residues predominate over residues 229-246 (DHPHGGGEGKTGEGRHPV).

This sequence belongs to the universal ribosomal protein uL2 family. As to quaternary structure, part of the 50S ribosomal subunit. Forms a bridge to the 30S subunit in the 70S ribosome.

In terms of biological role, one of the primary rRNA binding proteins. Required for association of the 30S and 50S subunits to form the 70S ribosome, for tRNA binding and peptide bond formation. It has been suggested to have peptidyltransferase activity; this is somewhat controversial. Makes several contacts with the 16S rRNA in the 70S ribosome. The sequence is that of Large ribosomal subunit protein uL2 from Polaromonas sp. (strain JS666 / ATCC BAA-500).